A 103-amino-acid polypeptide reads, in one-letter code: MAEFVRNLAEKAPALVNAAVTYSKPRLATFWYYAKVELVPPTPAEIPTAIQSLKKIINSAKTGSFKQLTVKEALLNGLVATEVWMWFYVGEIIGKRGIIGYDV.

Alanine 2 bears the N-acetylalanine mark. 4 positions are modified to N6-acetyllysine: lysine 11, lysine 24, lysine 35, and lysine 54.

In terms of assembly, component of the ATP synthase complex composed at least of ATP5F1A/subunit alpha, ATP5F1B/subunit beta, ATP5MC1/subunit c (homooctomer), MT-ATP6/subunit a, MT-ATP8/subunit 8, ATP5ME/subunit e, ATP5MF/subunit f, ATP5MG/subunit g, ATP5MK/subunit k, ATP5MJ/subunit j, ATP5F1C/subunit gamma, ATP5F1D/subunit delta, ATP5F1E/subunit epsilon, ATP5PF/subunit F6, ATP5PB/subunit b, ATP5PD/subunit d, ATP5PO/subunit OSCP. ATP synthase complex consists of a soluble F(1) head domain (subunits alpha(3) and beta(3)) - the catalytic core - and a membrane F(0) domain - the membrane proton channel (subunits c, a, 8, e, f, g, k and j). These two domains are linked by a central stalk (subunits gamma, delta, and epsilon) rotating inside the F1 region and a stationary peripheral stalk (subunits F6, b, d, and OSCP).

The protein localises to the mitochondrion. The protein resides in the mitochondrion inner membrane. In terms of biological role, subunit g, of the mitochondrial membrane ATP synthase complex (F(1)F(0) ATP synthase or Complex V) that produces ATP from ADP in the presence of a proton gradient across the membrane which is generated by electron transport complexes of the respiratory chain. ATP synthase complex consist of a soluble F(1) head domain - the catalytic core - and a membrane F(1) domain - the membrane proton channel. These two domains are linked by a central stalk rotating inside the F(1) region and a stationary peripheral stalk. During catalysis, ATP synthesis in the catalytic domain of F(1) is coupled via a rotary mechanism of the central stalk subunits to proton translocation. In vivo, can only synthesize ATP although its ATP hydrolase activity can be activated artificially in vitro. Part of the complex F(0) domain. The protein is ATP synthase F(0) complex subunit g, mitochondrial of Bos taurus (Bovine).